A 215-amino-acid polypeptide reads, in one-letter code: Probable transaldolase (215 aa).

The active-site Schiff-base intermediate with substrate is the Lys-83.

The protein belongs to the transaldolase family. Type 3B subfamily.

It localises to the cytoplasm. It catalyses the reaction D-sedoheptulose 7-phosphate + D-glyceraldehyde 3-phosphate = D-erythrose 4-phosphate + beta-D-fructose 6-phosphate. It participates in carbohydrate degradation; pentose phosphate pathway; D-glyceraldehyde 3-phosphate and beta-D-fructose 6-phosphate from D-ribose 5-phosphate and D-xylulose 5-phosphate (non-oxidative stage): step 2/3. Its function is as follows. Transaldolase is important for the balance of metabolites in the pentose-phosphate pathway. The chain is Probable transaldolase from Desulforapulum autotrophicum (strain ATCC 43914 / DSM 3382 / VKM B-1955 / HRM2) (Desulfobacterium autotrophicum).